The following is a 286-amino-acid chain: 2,3,4,5-tetrahydropyridine-2,6-dicarboxylate N-succinyltransferase (286 aa).

Belongs to the transferase hexapeptide repeat family.

It localises to the cytoplasm. It catalyses the reaction (S)-2,3,4,5-tetrahydrodipicolinate + succinyl-CoA + H2O = (S)-2-succinylamino-6-oxoheptanedioate + CoA. Its pathway is amino-acid biosynthesis; L-lysine biosynthesis via DAP pathway; LL-2,6-diaminopimelate from (S)-tetrahydrodipicolinate (succinylase route): step 1/3. In Rhizobium leguminosarum bv. trifolii (strain WSM2304), this protein is 2,3,4,5-tetrahydropyridine-2,6-dicarboxylate N-succinyltransferase.